Reading from the N-terminus, the 314-residue chain is DNA-directed RNA polymerase subunit alpha (314 aa).

The segment at 1–228 (MIEIEKPKIE…EHLNIFVGLT (228 aa)) is alpha N-terminal domain (alpha-NTD). An alpha C-terminal domain (alpha-CTD) region spans residues 245–314 (KEKVLEMTIE…ELGLSLRKDD (70 aa)).

It belongs to the RNA polymerase alpha chain family. As to quaternary structure, homodimer. The RNAP catalytic core consists of 2 alpha, 1 beta, 1 beta' and 1 omega subunit. When a sigma factor is associated with the core the holoenzyme is formed, which can initiate transcription.

It catalyses the reaction RNA(n) + a ribonucleoside 5'-triphosphate = RNA(n+1) + diphosphate. Functionally, DNA-dependent RNA polymerase catalyzes the transcription of DNA into RNA using the four ribonucleoside triphosphates as substrates. The polypeptide is DNA-directed RNA polymerase subunit alpha (Geobacillus kaustophilus (strain HTA426)).